The primary structure comprises 483 residues: Probable zinc metalloprotease PTRG_04977 (483 aa).

The first 18 residues, 1 to 18, serve as a signal peptide directing secretion; the sequence is MLFRSALLSNVLLLPACA. Asparagine 96 and asparagine 121 each carry an N-linked (GlcNAc...) asparagine glycan. Histidine 167, aspartate 187, and glutamate 220 together coordinate Zn(2+). Residue asparagine 235 is glycosylated (N-linked (GlcNAc...) asparagine). Residue aspartate 247 participates in Zn(2+) binding. N-linked (GlcNAc...) asparagine glycans are attached at residues asparagine 310, asparagine 362, asparagine 401, asparagine 411, and asparagine 421. Positions 396 to 483 constitute a Fibronectin type-III domain; sequence PAMPRNVTID…KSPAVYPFPG (88 aa).

This sequence belongs to the peptidase M28 family. M28B subfamily. Zn(2+) serves as cofactor.

Its subcellular location is the secreted. This chain is Probable zinc metalloprotease PTRG_04977, found in Pyrenophora tritici-repentis (strain Pt-1C-BFP) (Wheat tan spot fungus).